We begin with the raw amino-acid sequence, 407 residues long: Nuclear hormone receptor family member nhr-134 (407 aa).

The NR C4-type zinc finger occupies 11–31; sequence CEICGQKTSGRHFGVMSCRSC. An NR C4-type; degenerate zinc finger spans residues 47 to 66; it reads RCPNGNCKLLENGKFKCKKC. The NR LBD domain occupies 157 to 407; sequence QFHNSLERLA…FSEPDMFEST (251 aa).

This sequence belongs to the nuclear hormone receptor family.

The protein resides in the nucleus. Its function is as follows. Orphan nuclear receptor. The chain is Nuclear hormone receptor family member nhr-134 (nhr-134) from Caenorhabditis elegans.